The sequence spans 159 residues: Phosphopantetheine adenylyltransferase (159 aa).

Substrate is bound at residue serine 8. ATP contacts are provided by residues 8–9 (SF) and histidine 16. Lysine 40, threonine 72, and arginine 86 together coordinate substrate. ATP contacts are provided by residues 87–89 (GLR), glutamate 97, and 122–128 (YSFLSSS).

Belongs to the bacterial CoaD family. Homohexamer. Requires Mg(2+) as cofactor.

It localises to the cytoplasm. It carries out the reaction (R)-4'-phosphopantetheine + ATP + H(+) = 3'-dephospho-CoA + diphosphate. It participates in cofactor biosynthesis; coenzyme A biosynthesis; CoA from (R)-pantothenate: step 4/5. Its function is as follows. Reversibly transfers an adenylyl group from ATP to 4'-phosphopantetheine, yielding dephospho-CoA (dPCoA) and pyrophosphate. In Synechocystis sp. (strain ATCC 27184 / PCC 6803 / Kazusa), this protein is Phosphopantetheine adenylyltransferase.